Consider the following 324-residue polypeptide: AT-hook motif nuclear-localized protein 24 (324 aa).

Residues 1–12 are compositionally biased toward polar residues; it reads MDPVQSHGSQSS. Disordered regions lie at residues 1–122 and 262–324; these read MDPV…KPPI and MQTP…RPPY. A compositionally biased stretch (low complexity) spans 24-33; that stretch reads LHLQQQQQEF. Residues 69 to 79 are compositionally biased toward polar residues; sequence NIDNIANNSGS. A compositionally biased stretch (gly residues) spans 88 to 99; that stretch reads GGSGEGGGGSGG. A DNA-binding region (a.T hook) is located at residues 105–117; sequence RRPRGRPAGSKNK. The 140-residue stretch at 129–268 folds into the PPC domain; it reads ANALRTHVME…EDEMQTPVHG (140 aa). The span at 280-297 shows a compositional bias: low complexity; sequence MMGQQLQHQQQAMSGHQG. Residues 304–318 are compositionally biased toward polar residues; that stretch reads GSVQLQQQHDQSYWS.

It localises to the nucleus. Transcription factor that specifically binds AT-rich DNA sequences related to the nuclear matrix attachment regions (MARs). In Arabidopsis thaliana (Mouse-ear cress), this protein is AT-hook motif nuclear-localized protein 24.